Here is a 782-residue protein sequence, read N- to C-terminus: Semaphorin-3G (782 aa).

Residues 1 to 22 (MAPSAWAICWLLGGLLLHGGSS) form the signal peptide. The Sema domain maps to 32-519 (RLRLSYRDLL…SRLGVAQLRL (488 aa)). Asparagine 44 carries an N-linked (GlcNAc...) asparagine glycan. A disulfide bond links cysteine 105 and cysteine 116. N-linked (GlcNAc...) asparagine glycosylation is present at asparagine 127. 5 cysteine pairs are disulfide-bonded: cysteine 134/cysteine 143, cysteine 270/cysteine 382, cysteine 294/cysteine 342, cysteine 522/cysteine 540, and cysteine 603/cysteine 655. In terms of domain architecture, Ig-like C2-type spans 569–671 (PALQCLGQSQ…FSQTVVRLAL (103 aa)).

This sequence belongs to the semaphorin family.

The protein localises to the secreted. Its function is as follows. Has chemorepulsive activities for sympathetic axons. Ligand of NRP2. The sequence is that of Semaphorin-3G (SEMA3G) from Homo sapiens (Human).